The primary structure comprises 820 residues: Cell division control protein 48 homolog C (820 aa).

Disordered stretches follow at residues 72 to 157 and 169 to 188; these read RVKD…RFDL and LNSS…VEVE. Positions 76–87 are enriched in acidic residues; that stretch reads EDEDDNIGDEEG. A coiled-coil region spans residues 85–122; that stretch reads EEGSASQRKKQRRVDEKEEKLQRAEQSHLRKRNMERSV. Residues 97-119 are compositionally biased toward basic and acidic residues; it reads RVDEKEEKLQRAEQSHLRKRNME. Low complexity predominate over residues 121–142; sequence SVSSSPSSSSSSEDSGDVSTSE. ATP contacts are provided by residues 274–281 and 569–576; these read GPPGCGKT.

The protein belongs to the AAA ATPase family.

It is found in the nucleus. The protein localises to the cytoplasm. The protein resides in the cytoskeleton. Its subcellular location is the phragmoplast. In terms of biological role, probably functions in cell division and growth processes. Interacts with certain SNAREs as part of specialized membrane fusion events where vesicles from the same organelle fuse (homotypic fusion). The sequence is that of Cell division control protein 48 homolog C (CDC48C) from Arabidopsis thaliana (Mouse-ear cress).